An 87-amino-acid chain; its full sequence is Small ribosomal subunit protein bS20 (87 aa).

Residues 1 to 21 (MANIKQQIKRNKTNEKRRLKN) are disordered. Positions 7 to 20 (QIKRNKTNEKRRLK) are enriched in basic residues.

This sequence belongs to the bacterial ribosomal protein bS20 family.

Binds directly to 16S ribosomal RNA. The chain is Small ribosomal subunit protein bS20 from Phytoplasma mali (strain AT).